Here is a 146-residue protein sequence, read N- to C-terminus: Deoxyuridine 5'-triphosphate nucleotidohydrolase (146 aa).

Substrate is bound by residues 65–67 (RSG), Asn78, 82–84 (LID), and Met92.

This sequence belongs to the dUTPase family. Mg(2+) is required as a cofactor.

It carries out the reaction dUTP + H2O = dUMP + diphosphate + H(+). It functions in the pathway pyrimidine metabolism; dUMP biosynthesis; dUMP from dCTP (dUTP route): step 2/2. This enzyme is involved in nucleotide metabolism: it produces dUMP, the immediate precursor of thymidine nucleotides and it decreases the intracellular concentration of dUTP so that uracil cannot be incorporated into DNA. In Thiobacillus denitrificans (strain ATCC 25259 / T1), this protein is Deoxyuridine 5'-triphosphate nucleotidohydrolase.